An 882-amino-acid chain; its full sequence is MTTSELPEHLAKHEVRYADHRQVERDRLTPMMQHYAEVKDQHLQQILLYRMGDFFECFFQDAIVVARELELVLTSKEAGKEVGRVPMAGIPYHALDRYASQLVEKGYAIAICDQVETAAQAQGPLVRREITRIITPGTILEEGMLQARRNNFLAAVVIAGEHWGLAYADSSTGDYWTSQSTGLEGLTQELYRLQPSEVLFPSAAPDLAGLLRPGQSKPQQIPDCLPDSFCYALRSPMPFELHEARQRLLEHFQLRSLEGCGCEQLPLAIRAAGGLLDYLGETQRESLAPLQKPRTYSLSEFLILDQQTRRNLEITQTQRDGSFHGSLLWALDRTMTSMGGRLLRRWLLQPLLNPEAIRNRQAAIQELCQDGRLRQDLRSLLQKIYDLERLSGRAGAGTANARDLLALAESLLRLPELAQLLSRAQSPLLAQLQQVPPELEQLGDRLQQHLVESPPLQLTEGGLIRSGVAIALDELRQQVESDRQWIASLEASERTATGINSLKVGYSKTFGYFISLSRSKADQVPDHYIRRQTLTNEERFITPDLKERESRILNAQTDLNQLEYDLFVGLRSEVSHHVETIRAIATAVAAADVLAALAEVAVYQNYCCPEIRDDRQLAIQDGRHPVVEQALPSGFYVPNSCGLGSDRGPDLIVLTGPNASGKSCYLRQVGLIQLLAQIGSFVPAKNAQVGICDRIFTRVGAVDDLATGQSTFMVEMDETANILNHATARSLVLLDEIGRGTATFDGLSIAWAVAEYLAREIQARTIFATHYHELNELSGLLKNVANFQVTVKELPDRIVFLHQVQPGGADRSYGIEAARLAGLPSEVIDRAREVMSRIEKHSRIAVGLRRGNGSQRRTQASPQQIDATIATEQLGLFSGPSH.

656–663 (GPNASGKS) is a binding site for ATP.

Belongs to the DNA mismatch repair MutS family.

This protein is involved in the repair of mismatches in DNA. It is possible that it carries out the mismatch recognition step. This protein has a weak ATPase activity. This chain is DNA mismatch repair protein MutS, found in Synechococcus sp. (strain ATCC 27144 / PCC 6301 / SAUG 1402/1) (Anacystis nidulans).